Here is a 501-residue protein sequence, read N- to C-terminus: Pyruvate dehydrogenase protein X component, mitochondrial (501 aa).

A mitochondrion-targeting transit peptide spans 1 to 53 (MAASWRLHCNQPLLRYLLGFSSRRSLGLAQGAAAWPVDRGASWRWFHSTQLLQ). Residues 56 to 132 (PIKVLMPSLS…QLGSLIALMV (77 aa)) form the Lipoyl-binding domain. K97 bears the N6-lipoyllysine mark. Residues 145–176 (KDVSAPPPVSKPPAPTQPSPQPQIPCPARKEH) form a disordered region. The span at 149-169 (APPPVSKPPAPTQPSPQPQIP) shows a compositional bias: pro residues. A Peripheral subunit-binding (PSBD) domain is found at 183 to 220 (RLSPAARNILEKHSLDASQGTATGPRGIFTKEDALKLV). The residue at position 194 (K194) is an N6-acetyllysine. Residue S196 is modified to Phosphoserine. Residues 228 to 256 (ITESRPASAPPPSLSASVPPQATAGPSYP) form a disordered region. At K394 the chain carries N6-succinyllysine.

It belongs to the 2-oxoacid dehydrogenase family. As to quaternary structure, part of the inner core of the multimeric pyruvate dehydrogenase complex that is composed of about 48 DLAT and 12 PDHX molecules. This core binds multiple copies of pyruvate dehydrogenase (subunits PDH1A and PDHB, E1), dihydrolipoamide acetyltransferase (DLAT, E2) and lipoamide dehydrogenase (DLD, E3). Interacts with SIRT4. Interacts with DLD. Delipoylated at Lys-97 by SIRT4, delipoylation decreases the PHD complex activity.

The protein localises to the mitochondrion matrix. Functionally, required for anchoring dihydrolipoamide dehydrogenase (E3) to the dihydrolipoamide transacetylase (E2) core of the pyruvate dehydrogenase complexes of eukaryotes. This specific binding is essential for a functional PDH complex. The sequence is that of Pyruvate dehydrogenase protein X component, mitochondrial (Pdhx) from Mus musculus (Mouse).